Here is a 125-residue protein sequence, read N- to C-terminus: Large ribosomal subunit protein bL12 (125 aa).

Belongs to the bacterial ribosomal protein bL12 family. As to quaternary structure, homodimer. Part of the ribosomal stalk of the 50S ribosomal subunit. Forms a multimeric L10(L12)X complex, where L10 forms an elongated spine to which 2 to 4 L12 dimers bind in a sequential fashion. Binds GTP-bound translation factors.

Forms part of the ribosomal stalk which helps the ribosome interact with GTP-bound translation factors. Is thus essential for accurate translation. The protein is Large ribosomal subunit protein bL12 of Thermoanaerobacter pseudethanolicus (strain ATCC 33223 / 39E) (Clostridium thermohydrosulfuricum).